Reading from the N-terminus, the 459-residue chain is Diaminopimelate decarboxylase (459 aa).

At Lys89 the chain carries N6-(pyridoxal phosphate)lysine. Pyridoxal 5'-phosphate is bound by residues Gly271 and 313-316 (EPGR). Residues Arg316, Arg357, and Tyr361 each contribute to the substrate site. The Proton donor role is filled by Cys388. Glu389 and Tyr418 together coordinate substrate. Tyr418 lines the pyridoxal 5'-phosphate pocket.

It belongs to the Orn/Lys/Arg decarboxylase class-II family. LysA subfamily. In terms of assembly, homodimer. The cofactor is pyridoxal 5'-phosphate.

The catalysed reaction is meso-2,6-diaminopimelate + H(+) = L-lysine + CO2. It participates in amino-acid biosynthesis; L-lysine biosynthesis via DAP pathway; L-lysine from DL-2,6-diaminopimelate: step 1/1. Its function is as follows. Specifically catalyzes the decarboxylation of meso-diaminopimelate (meso-DAP) to L-lysine. The chain is Diaminopimelate decarboxylase from Corynebacterium efficiens (strain DSM 44549 / YS-314 / AJ 12310 / JCM 11189 / NBRC 100395).